Here is a 473-residue protein sequence, read N- to C-terminus: MGRPAPRGSPDSAPPTKGMTGARTAWWVWCVQVATFVVSAVCVTGLLVLASVFRARFPCFYATASSYAGVNSTAEVRGGVAVPLRLDTQSLVGTYVITAVLLLAVAVYAVVGAVTSRYDRALDAGRRLAAARMAMPHATLIAGNVCSWLLQITVLLLAHRISQLAHLVYVLHFACLVYFAAHFCTRGVLSGTYLRQVHGLMELAPTHHRVVGPARAVLTNALLLGVFLCTADAAVSLNTIAAFNFNFSAPGMLICLTVLFAILVVSLLLVVEGVLCHYVRVLVGPHLGAVAATGIVGLACEHYYTNGYYVVETQWPGAQTGVRVALALVAAFALGMAVLRCTRAYLYHRRHHTKFFMRMRDTRHRAHSALKRVRSSMRGSRDGRHRPAPGSPPGIPEYAEDPYAISYGGQLDRYGDSDGEPIYDEVADDQTDVLYAKIQHPRHLPDDDPIYDTVGGYDPEPAEDPVYSTVRRW.

Topologically, residues 1–32 (MGRPAPRGSPDSAPPTKGMTGARTAWWVWCVQ) are intravirion. The chain crosses the membrane as a helical span at residues 33–53 (VATFVVSAVCVTGLLVLASVF). At 54-90 (RARFPCFYATASSYAGVNSTAEVRGGVAVPLRLDTQS) the chain is on the virion surface side. A helical transmembrane segment spans residues 91–111 (LVGTYVITAVLLLAVAVYAVV). Residues 112–137 (GAVTSRYDRALDAGRRLAAARMAMPH) lie on the Intravirion side of the membrane. Residues 138-158 (ATLIAGNVCSWLLQITVLLLA) traverse the membrane as a helical segment. Over 159–163 (HRISQ) the chain is Virion surface. The helical transmembrane segment at 164–184 (LAHLVYVLHFACLVYFAAHFC) threads the bilayer. The Intravirion portion of the chain corresponds to 185-216 (TRGVLSGTYLRQVHGLMELAPTHHRVVGPARA). The chain crosses the membrane as a helical span at residues 217 to 237 (VLTNALLLGVFLCTADAAVSL). The Virion surface portion of the chain corresponds to 238–250 (NTIAAFNFNFSAP). A helical membrane pass occupies residues 251-271 (GMLICLTVLFAILVVSLLLVV). Residues 272 to 280 (EGVLCHYVR) are Intravirion-facing. Residues 281-301 (VLVGPHLGAVAATGIVGLACE) traverse the membrane as a helical segment. The Virion surface segment spans residues 302-318 (HYYTNGYYVVETQWPGA). The helical transmembrane segment at 319 to 339 (QTGVRVALALVAAFALGMAVL) threads the bilayer. Residues 340 to 473 (RCTRAYLYHR…DPVYSTVRRW (134 aa)) lie on the Intravirion side of the membrane. 2 disordered regions span residues 371 to 399 (KRVRSSMRGSRDGRHRPAPGSPPGIPEYA) and 440 to 473 (HPRHLPDDDPIYDTVGGYDPEPAEDPVYSTVRRW).

It belongs to the herpesviridae glycoprotein M family. In terms of assembly, interacts (via N-terminus) with gN (via N-terminus). The gM-gN heterodimer forms the gCII complex.

Its subcellular location is the virion membrane. It is found in the host Golgi apparatus. It localises to the host trans-Golgi network. The protein localises to the host endosome membrane. The protein resides in the host nucleus inner membrane. Envelope glycoprotein important for virion assembly and egress. Plays a role in the correct incorporation of gH-gL into virion membrane. Directs the glycoprotein N (gN) to the host trans-Golgi network. This chain is Envelope glycoprotein M, found in Human herpesvirus 1 (strain 17) (HHV-1).